The chain runs to 189 residues: MTKLLVGLGNPGDKYFETKHNVGFMLIDQLAKKQNVTFTHDKIFQADLASFFLNGEKIYLVKPTTFMNESGKAVHALLTYYGLDIDDLLIIYDDLDMEVGKIRLRAKGSAGGHNGIKSIIQHIGTQVFNRVKIGIGRPKNGMSVVHHVLSKFDRDDYIGILQSIDKVDDSVNYYLQEKNFEKTMQRYNG.

Tyrosine 15 is a tRNA binding site. The active-site Proton acceptor is histidine 20. TRNA contacts are provided by phenylalanine 66, asparagine 68, and asparagine 114.

This sequence belongs to the PTH family. Monomer.

The protein localises to the cytoplasm. It carries out the reaction an N-acyl-L-alpha-aminoacyl-tRNA + H2O = an N-acyl-L-amino acid + a tRNA + H(+). Hydrolyzes ribosome-free peptidyl-tRNAs (with 1 or more amino acids incorporated), which drop off the ribosome during protein synthesis, or as a result of ribosome stalling. Functionally, catalyzes the release of premature peptidyl moieties from peptidyl-tRNA molecules trapped in stalled 50S ribosomal subunits, and thus maintains levels of free tRNAs and 50S ribosomes. In Streptococcus pneumoniae (strain JJA), this protein is Peptidyl-tRNA hydrolase.